We begin with the raw amino-acid sequence, 262 residues long: 4-hydroxy-2-oxo-heptane-1,7-dioate aldolase (262 aa).

His-45 acts as the Proton acceptor in catalysis. Residue Gln-147 coordinates substrate. Glu-149 contributes to the a divalent metal cation binding site. Substrate-binding residues include Ala-174 and Asp-175. Position 175 (Asp-175) interacts with a divalent metal cation.

This sequence belongs to the HpcH/HpaI aldolase family. In terms of assembly, homohexamer; trimer of dimers. A divalent metal cation serves as cofactor.

It carries out the reaction 4-hydroxy-2-oxoheptanedioate = succinate semialdehyde + pyruvate. It catalyses the reaction D-glyceraldehyde + 3-hydroxypyruvate = (3R,4S,5R)-3,4,5,6-tetrahydroxy-2-oxohexanoate. The enzyme catalyses D-glyceraldehyde + 3-hydroxypyruvate = 2-dehydro-D-gluconate. The catalysed reaction is D-glyceraldehyde + 3-hydroxypyruvate = 2-dehydro-D-galactonate. It carries out the reaction D-glyceraldehyde + pyruvate = 2-dehydro-3-deoxy-L-galactonate. It catalyses the reaction 2-dehydro-3-deoxy-D-gluconate = D-glyceraldehyde + pyruvate. Its pathway is aromatic compound metabolism; 4-hydroxyphenylacetate degradation; pyruvate and succinate semialdehyde from 4-hydroxyphenylacetate: step 7/7. Catalyzes the reversible retro-aldol cleavage of 4-hydroxy-2-ketoheptane-1,7-dioate (HKHD) to pyruvate and succinic semialdehyde. In vitro, can catalyze the aldolisation reaction between hydroxypyruvate (HPA) or pyruvate (PA) and D-glyceraldehyde (D-GA). The condensation of hydroxypyruvate and D-glyceraldehyde produces (3R,4S,5R)-3,4,5,6-tetrahydroxy-2-oxohexanoate as the major product, 2-dehydro-D-gluconate and 2-dehydro-D-galactonate. The condensation of pyruvate and D-glyceraldehyde produces 2-dehydro-3-deoxy-L-galactonate as the major product and 2-dehydro-3-deoxy-D-gluconate. This is 4-hydroxy-2-oxo-heptane-1,7-dioate aldolase from Escherichia coli (strain ATCC 8739 / DSM 1576 / NBRC 3972 / NCIMB 8545 / WDCM 00012 / Crooks).